Here is a 279-residue protein sequence, read N- to C-terminus: Urease accessory protein UreD (279 aa).

It belongs to the UreD family. UreD, UreF and UreG form a complex that acts as a GTP-hydrolysis-dependent molecular chaperone, activating the urease apoprotein by helping to assemble the nickel containing metallocenter of UreC. The UreE protein probably delivers the nickel.

The protein resides in the cytoplasm. Required for maturation of urease via the functional incorporation of the urease nickel metallocenter. The sequence is that of Urease accessory protein UreD from Streptococcus salivarius (strain 57.I).